We begin with the raw amino-acid sequence, 332 residues long: MAASLRRPSFTTCSSPTDTDDEGVRGTCEDASICKRFAVSIGYWQDPYIQHLVRLSKERKAPEINRGYFARVHGVSQLTKAFLRKTECNCQILNLGAGMDTTFWMLKDEDLLPRKYFEIDFPMIVTRKLHSIKLKPLLSKPILDLHSEDTLQMDGHMLDSTRYAIIGADLRDIADLEEKLKKCNMSTQLPTLLIAECVLVYMTPEQSANLLKWAANSFEAAMFINYEQVNMGDRFGQIMIENLRRRQCDLAGVETCKSLESQRERLLSSGWESASAIDMMEVYSRLPRAEVIRIEALEFLDEMELLEQLMQHYCLCWATKGGSELGLKEITY.

The tract at residues 1–23 is disordered; it reads MAASLRRPSFTTCSSPTDTDDEG. Residues Arg-71, Gly-96, Asp-120, 169 to 170, and Glu-196 each bind S-adenosyl-L-methionine; that span reads DL.

Belongs to the methyltransferase superfamily. LCMT family.

It carries out the reaction [phosphatase 2A protein]-C-terminal L-leucine + S-adenosyl-L-methionine = [phosphatase 2A protein]-C-terminal L-leucine methyl ester + S-adenosyl-L-homocysteine. Methylates the carboxyl group of the C-terminal leucine residue of protein phosphatase 2A catalytic subunits to form alpha-leucine ester residues. This Bos taurus (Bovine) protein is Leucine carboxyl methyltransferase 1 (LCMT1).